Consider the following 636-residue polypeptide: DNA mismatch repair protein MutL (636 aa).

Residues 341 to 420 (APLINKPEQQ…PGAEEYTPEA (80 aa)) are disordered. Positions 348-358 (EQQKLDFDQVR) are enriched in basic and acidic residues.

The protein belongs to the DNA mismatch repair MutL/HexB family.

Functionally, this protein is involved in the repair of mismatches in DNA. It is required for dam-dependent methyl-directed DNA mismatch repair. May act as a 'molecular matchmaker', a protein that promotes the formation of a stable complex between two or more DNA-binding proteins in an ATP-dependent manner without itself being part of a final effector complex. The protein is DNA mismatch repair protein MutL of Bacillus licheniformis (strain ATCC 14580 / DSM 13 / JCM 2505 / CCUG 7422 / NBRC 12200 / NCIMB 9375 / NCTC 10341 / NRRL NRS-1264 / Gibson 46).